We begin with the raw amino-acid sequence, 635 residues long: MTVVRLPDGTDRVFDNSVTVREVAESISPGLARAALAGKLNGKLVDLSEQIETDSDLVLITDKDSEGLEIIRHSCAHLLAHAVKELFPGTQVTIGPVIENGFYYDFSYERPFTPEDLVAIEKRMQEISKRALKIERKVWDRSRAINFFKDIGEHYKAQIIESIPDNEPVSLYSQGDFTDLCRGPHVPYTSKIKVFKLMKIAGAYWRGDSKNEMLQRIYGTAWVSNEEQNNYLRCLEEAEKRDHRKLGKQLDLFHTQEEAPGMVYWHPKGWVVWQQIEQYMRQTLAGNGYVEIRTPQVLDRSLWESSGHWENFRENMFITESENRHYAIKPMNCPGHVQVFNHGLRSYRDLPLRLAEFGSCHRNEASGALHGLMRVRSFTQDDAHIFCTEDQILGEVTKFIDLLNQVYINFGFSETLIKLSTRPLKRVGTEDQWDKAETALATALNQKELNWEVQPGEGAFYGPKIEFTLKDSLGRKWQCGTLQLDFSMPARLGAGYIAEDNTRKIPVMLHRAILGSMERFIGILIEHHAGALPLWLSPEQVIILNISRNQAEYAQLITDELKQSGIRASSDLRNEKISYKIREHSMQKIPYLMVVGDKEMENRTVTVRGRAGQDYGAMSVESFVVRAQEEIAKRL.

In terms of domain architecture, TGS spans 1-61 (MTVVRLPDGT…ETDSDLVLIT (61 aa)). The segment at 242–533 (DHRKLGKQLD…LIEHHAGALP (292 aa)) is catalytic. Residues Cys-333, His-384, and His-510 each coordinate Zn(2+).

The protein belongs to the class-II aminoacyl-tRNA synthetase family. In terms of assembly, homodimer. The cofactor is Zn(2+).

The protein localises to the cytoplasm. It carries out the reaction tRNA(Thr) + L-threonine + ATP = L-threonyl-tRNA(Thr) + AMP + diphosphate + H(+). In terms of biological role, catalyzes the attachment of threonine to tRNA(Thr) in a two-step reaction: L-threonine is first activated by ATP to form Thr-AMP and then transferred to the acceptor end of tRNA(Thr). Also edits incorrectly charged L-seryl-tRNA(Thr). This chain is Threonine--tRNA ligase, found in Nitrosomonas europaea (strain ATCC 19718 / CIP 103999 / KCTC 2705 / NBRC 14298).